Here is a 344-residue protein sequence, read N- to C-terminus: Dihydroorotate dehydrogenase (quinone) (344 aa).

Residues 64–68 and Thr-88 contribute to the FMN site; that span reads AGLDK. Lys-68 provides a ligand contact to substrate. 113–117 contacts substrate; the sequence is NRMGF. 2 residues coordinate FMN: Asn-144 and Asn-177. Asn-177 provides a ligand contact to substrate. Ser-180 serves as the catalytic Nucleophile. Asn-182 lines the substrate pocket. 2 residues coordinate FMN: Lys-222 and Thr-250. Substrate is bound at residue 251–252; it reads NT. FMN contacts are provided by residues Gly-273, Gly-302, and 323 to 324; that span reads YS.

It belongs to the dihydroorotate dehydrogenase family. Type 2 subfamily. In terms of assembly, monomer. FMN is required as a cofactor.

Its subcellular location is the cell membrane. The catalysed reaction is (S)-dihydroorotate + a quinone = orotate + a quinol. It functions in the pathway pyrimidine metabolism; UMP biosynthesis via de novo pathway; orotate from (S)-dihydroorotate (quinone route): step 1/1. In terms of biological role, catalyzes the conversion of dihydroorotate to orotate with quinone as electron acceptor. The protein is Dihydroorotate dehydrogenase (quinone) of Polynucleobacter necessarius subsp. necessarius (strain STIR1).